The chain runs to 146 residues: Transcriptional regulator AdcR (146 aa).

The HTH marR-type domain maps to 1–143; it reads MRQLAKDINA…IQRFLTALVG (143 aa). 4 residues coordinate Zn(2+): Glu-24, Cys-30, Glu-41, and His-42. Residues 54-77 constitute a DNA-binding region (H-T-H motif); it reads NSELARRLNVSQAAVTKAIKSLVK. Positions 107, 108, and 112 each coordinate Zn(2+).

As to quaternary structure, homodimer.

Its activity is regulated as follows. Zinc acts as a coregulator and is required for DNA-binding activity. Its function is as follows. Zinc-responsive regulator that acts both as a repressor and as an activator by regulating directly the promoters of its target genes. In the presence of zinc, directly represses the expression of the adcRCBA operon, of genes coding for a group of surface antigen zinc-binding pneumococcal histidine triad proteins (PhtA, PhtB, PhtD and PhtE), and of adcAII. Can also activate expression of adh. This Streptococcus pneumoniae serotype 2 (strain D39 / NCTC 7466) protein is Transcriptional regulator AdcR (adcR).